The chain runs to 1008 residues: CRAL-TRIO domain-containing protein C23B6.04c (1008 aa).

Disordered stretches follow at residues 1-247 (MKDS…AKSE), 284-306 (DGRD…DVDS), and 374-514 (QKVV…ASAK). The span at 79-110 (TVHTKTGSSSSPASKMRNTVNLQHIQAANQKT) shows a compositional bias: polar residues. 2 stretches are compositionally biased toward basic and acidic residues: residues 111–131 (RNAE…KAEA) and 170–187 (MNDK…DSKL). Polar residues-rich tracts occupy residues 374–389 (QKVV…STDN), 397–432 (DHPS…TSPK), 467–478 (GGNSVTAPSTPS), and 495–505 (GRSSTAPSTPN). Phosphoserine occurs at positions 525 and 559. In terms of domain architecture, CRAL-TRIO spans 675–828 (EIQEENATGK…NFGGSLHFEY (154 aa)). The tract at residues 883–982 (SLTNRSSSPT…KSGSGVSETP (100 aa)) is disordered. Positions 885–899 (TNRSSSPTVTPTVNT) are enriched in low complexity. Residues Ser888 and Ser890 each carry the phosphoserine modification. Residues 914–931 (SPQKRRVENPKPVVKDEG) show a composition bias toward basic and acidic residues.

It localises to the cell membrane. The polypeptide is CRAL-TRIO domain-containing protein C23B6.04c (Schizosaccharomyces pombe (strain 972 / ATCC 24843) (Fission yeast)).